The sequence spans 43 residues: uncharacterized protein (43 aa).

This is an uncharacterized protein from Escherichia coli (Bacteriophage T4).